The primary structure comprises 287 residues: Putative esterase/lipase HI_0193 (287 aa).

Residues 47–273 enclose the AB hydrolase-1 domain; sequence PVLIFIHGLF…SGHWVHAEKP (227 aa). Active-site residues include S119 and H266.

It belongs to the DmpD/TodF/XylF esterase family.

The polypeptide is Putative esterase/lipase HI_0193 (Haemophilus influenzae (strain ATCC 51907 / DSM 11121 / KW20 / Rd)).